Reading from the N-terminus, the 292-residue chain is UDP-N-acetylenolpyruvoylglucosamine reductase (292 aa).

Residues 27 to 188 enclose the FAD-binding PCMH-type domain; that stretch reads KIGGPVRLFI…LRVGFRIIKG (162 aa). Arg-166 is an active-site residue. Ser-217 acts as the Proton donor in catalysis. The active site involves Glu-288.

It belongs to the MurB family. FAD is required as a cofactor.

Its subcellular location is the cytoplasm. It carries out the reaction UDP-N-acetyl-alpha-D-muramate + NADP(+) = UDP-N-acetyl-3-O-(1-carboxyvinyl)-alpha-D-glucosamine + NADPH + H(+). It functions in the pathway cell wall biogenesis; peptidoglycan biosynthesis. Its function is as follows. Cell wall formation. This chain is UDP-N-acetylenolpyruvoylglucosamine reductase, found in Thermosipho melanesiensis (strain DSM 12029 / CIP 104789 / BI429).